The following is a 60-amino-acid chain: Short neurotoxin 1 (60 aa).

4 disulfide bridges follow: Cys3/Cys22, Cys17/Cys39, Cys41/Cys52, and Cys53/Cys58.

This sequence belongs to the three-finger toxin family. Short-chain subfamily. Type I alpha-neurotoxin sub-subfamily. Expressed by the venom gland.

It localises to the secreted. Binds to muscle nicotinic acetylcholine receptor (nAChR) and inhibit acetylcholine from binding to the receptor, thereby impairing neuromuscular transmission. The recombinant protein also barely blocks voltage-gated potassium channel Kv1.3/KCNA3 (2.71% inhibition at 60 nM of toxin). This Hydrophis lapemoides (Persian gulf sea snake) protein is Short neurotoxin 1.